We begin with the raw amino-acid sequence, 311 residues long: Malate dehydrogenase (311 aa).

Residues 7 to 13 (GAAGGIG) and D34 contribute to the NAD(+) site. The substrate site is built by R81 and R87. NAD(+) is bound by residues N94 and 117 to 119 (ITN). Substrate-binding residues include N119 and R153. The active-site Proton acceptor is the H177. Position 227 (M227) interacts with NAD(+).

The protein belongs to the LDH/MDH superfamily. MDH type 1 family. As to quaternary structure, homodimer.

It carries out the reaction (S)-malate + NAD(+) = oxaloacetate + NADH + H(+). Its function is as follows. Catalyzes the reversible oxidation of malate to oxaloacetate. This Yersinia enterocolitica serotype O:8 / biotype 1B (strain NCTC 13174 / 8081) protein is Malate dehydrogenase.